The primary structure comprises 421 residues: Serine hydroxymethyltransferase (421 aa).

(6S)-5,6,7,8-tetrahydrofolate-binding positions include leucine 118 and glycine 122–leucine 124. An N6-(pyridoxal phosphate)lysine modification is found at lysine 226.

The protein belongs to the SHMT family. Homodimer. It depends on pyridoxal 5'-phosphate as a cofactor.

It localises to the cytoplasm. It carries out the reaction (6R)-5,10-methylene-5,6,7,8-tetrahydrofolate + glycine + H2O = (6S)-5,6,7,8-tetrahydrofolate + L-serine. It participates in one-carbon metabolism; tetrahydrofolate interconversion. The protein operates within amino-acid biosynthesis; glycine biosynthesis; glycine from L-serine: step 1/1. Its function is as follows. Catalyzes the reversible interconversion of serine and glycine with tetrahydrofolate (THF) serving as the one-carbon carrier. This reaction serves as the major source of one-carbon groups required for the biosynthesis of purines, thymidylate, methionine, and other important biomolecules. Also exhibits THF-independent aldolase activity toward beta-hydroxyamino acids, producing glycine and aldehydes, via a retro-aldol mechanism. In Mycoplasmopsis agalactiae (strain NCTC 10123 / CIP 59.7 / PG2) (Mycoplasma agalactiae), this protein is Serine hydroxymethyltransferase.